A 692-amino-acid chain; its full sequence is Elongation factor G (692 aa).

The region spanning Ala-8–Leu-282 is the tr-type G domain. GTP contacts are provided by residues Ala-17–Thr-24, Asp-81–His-85, and Asn-135–Asp-138.

Belongs to the TRAFAC class translation factor GTPase superfamily. Classic translation factor GTPase family. EF-G/EF-2 subfamily.

The protein localises to the cytoplasm. Its function is as follows. Catalyzes the GTP-dependent ribosomal translocation step during translation elongation. During this step, the ribosome changes from the pre-translocational (PRE) to the post-translocational (POST) state as the newly formed A-site-bound peptidyl-tRNA and P-site-bound deacylated tRNA move to the P and E sites, respectively. Catalyzes the coordinated movement of the two tRNA molecules, the mRNA and conformational changes in the ribosome. This Streptococcus pyogenes serotype M49 (strain NZ131) protein is Elongation factor G.